The following is a 217-amino-acid chain: MTHSAWHDEIKQVLPKDYYRRINRFLDEVYATGVVYPPRDNVFKALQVTPLEETRVLILGQDPYHGPLQAQGLSFSVPDSIPAPPSLQNILEELAADIGVRNHHDLSSWAEQGVLLLNACLTVPEGRANGHAGLIWEPFTDAVIKVLNAKDRPVVFILWGAYARRKKALITNPIHHVIESPHPSPLSAYRGFFGSKPFSRANAILEKEGLGQIDWLK.

The active-site Proton acceptor is the aspartate 62.

This sequence belongs to the uracil-DNA glycosylase (UDG) superfamily. UNG family.

It is found in the cytoplasm. The catalysed reaction is Hydrolyzes single-stranded DNA or mismatched double-stranded DNA and polynucleotides, releasing free uracil.. Excises uracil residues from the DNA which can arise as a result of misincorporation of dUMP residues by DNA polymerase or due to deamination of cytosine. This is Uracil-DNA glycosylase from Streptococcus equi subsp. zooepidemicus (strain MGCS10565).